The sequence spans 366 residues: Inhibin alpha chain (366 aa).

The signal sequence occupies residues 1–18 (MVLHLLLFLLLTPQGGHS). Positions 19 to 61 (CQGLELARELVLAKVRALFLDALGPPAVTREGGDPGVRRLPRR) are excised as a propeptide. Residues 62 to 232 (HALGGFTHRG…PPSGGERARR (171 aa)) constitute a propeptide, inhibin alpha N-terminal region. N-linked (GlcNAc...) asparagine glycosylation is found at N146 and N268. Cystine bridges form between C262/C328, C291/C363, and C295/C365. N302 is a glycosylation site (N-linked (GlcNAc...) asparagine; partial).

It belongs to the TGF-beta family. In terms of assembly, dimeric, linked by one or more disulfide bonds. Activin B is a dimer of alpha and beta-B. Inhibin A is a dimer of alpha and beta-A. Inhibin B is a dimer of alpha and beta-B. Interacts with TGFBR3L; this interaction regulates female fertility. Proteolytic processing yields a number of bioactive forms. The 20/23 kDa forms consist solely of the mature alpha chain, the 26/29 kDa forms consist of the most N-terminal propeptide linked through a disulfide bond to the mature alpha chain, the 50/53 kDa forms encompass the entire proprotein. Each type can be furthermore either mono- or diglycosylated, causing the mass difference. Originally found in ovary (granulosa cells) and testis (Sertoli cells), but widely distributed in many tissues including brain and placenta. In adrenal cortex expression is limited to the zona reticularis and the innermost zona fasciculata in the normal gland, extending centripetally into the zona fasciculata in hyperplasia. Also found in adrenocortical tumors. Also expressed in prostate epithelium of benign prostatic hyperplasia, in regions of basal cell hyperplasia and in nonmalignant regions of high grade prostate cancer. Only circulating inhibin B is found in male, whereas circulating inhibins A and B are found in female.

It localises to the secreted. In terms of biological role, inhibins and activins inhibit and activate, respectively, the secretion of follitropin by the pituitary gland. Inhibins/activins are involved in regulating a number of diverse functions such as hypothalamic and pituitary hormone secretion, gonadal hormone secretion, germ cell development and maturation, erythroid differentiation, insulin secretion, nerve cell survival, embryonic axial development or bone growth, depending on their subunit composition. Inhibins appear to oppose the functions of activins. Functionally, inhibin A is a dimer of alpha/INHA and beta-A/INHBA that functions as a feedback regulator in the hypothalamic-pituitary-gonadal (HPG) axis. Inhibits the secretion of FSH from the anterior pituitary gland by acting on pituitary gonadotrope cells. Antagonizes activin A by binding to the proteoglycan, betaglycan, and forming a stable complex with and, thereby, sequestering type II activin receptors while excluding type I receptor. Inhibin B is a dimer of alpha and beta-B that plays a crucial role in the regulation of the reproductive system by inhibiting the secretion of follicle-stimulating hormone (FSH) from the anterior pituitary gland. Thereby, maintains reproductive homeostasis in both males and females. Acts as a more potent suppressor of FSH release than inhibin A. Functions as competitive receptor antagonist binding activin type II receptors with high affinity in the presence of the TGF-beta type III coreceptor/TGFBR3L. This is Inhibin alpha chain (INHA) from Homo sapiens (Human).